The following is a 214-amino-acid chain: Osteoclast-stimulating factor 1 (214 aa).

Serine 2 is subject to N-acetylserine. Residues 12-71 form the SH3 domain; that stretch reads GQVKVFRALYTFEPRTPDELYFEEGDIIYITDMSDTNWWKGTCKGRTGLIPSNYVAEQAE. 3 ANK repeats span residues 72 to 101, 105 to 135, and 139 to 168; these read SIDN…GVNG, AGST…ELNQ, and LGDT…RTDL. A phosphoserine mark is found at serine 202 and serine 213.

In terms of assembly, interacts with SRC and SMN1. Interacts with FASLG.

It is found in the cytoplasm. Functionally, induces bone resorption, acting probably through a signaling cascade which results in the secretion of factor(s) enhancing osteoclast formation and activity. This chain is Osteoclast-stimulating factor 1 (OSTF1), found in Bos taurus (Bovine).